The sequence spans 132 residues: Small ribosomal subunit protein uS8 (132 aa).

This sequence belongs to the universal ribosomal protein uS8 family. As to quaternary structure, part of the 30S ribosomal subunit. Contacts proteins S5 and S12.

In terms of biological role, one of the primary rRNA binding proteins, it binds directly to 16S rRNA central domain where it helps coordinate assembly of the platform of the 30S subunit. The protein is Small ribosomal subunit protein uS8 of Francisella philomiragia subsp. philomiragia (strain ATCC 25017 / CCUG 19701 / FSC 153 / O#319-036).